We begin with the raw amino-acid sequence, 139 residues long: Actin-depolymerizing factor 3 (139 aa).

Residues A5 to N139 enclose the ADF-H domain. A Phosphoserine modification is found at S6.

This sequence belongs to the actin-binding proteins ADF family.

It localises to the cytoplasm. The protein resides in the cytoskeleton. Its function is as follows. Actin-depolymerizing protein. Severs actin filaments (F-actin) and binds to actin monomers. The protein is Actin-depolymerizing factor 3 (ADF3) of Arabidopsis thaliana (Mouse-ear cress).